The following is a 206-amino-acid chain: Uridine kinase (206 aa).

11–18 (GGSASGKT) contributes to the ATP binding site.

The protein belongs to the uridine kinase family.

It is found in the cytoplasm. It carries out the reaction uridine + ATP = UMP + ADP + H(+). The catalysed reaction is cytidine + ATP = CMP + ADP + H(+). It participates in pyrimidine metabolism; CTP biosynthesis via salvage pathway; CTP from cytidine: step 1/3. It functions in the pathway pyrimidine metabolism; UMP biosynthesis via salvage pathway; UMP from uridine: step 1/1. This is Uridine kinase from Lactococcus lactis subsp. cremoris (strain MG1363).